The sequence spans 303 residues: MRVALLMGGVSREREISLRSGERVKKALEKLGYEYTVFDVKEDFLKEVDQLKSFDVVFNVLHGTFGEDGTLQAILDFLGIRYTGSDAFSSMICFDKLATYRFLKDIVEIPDFIEIREFMETSPLGYPCVVKPRREGSSIGVFICESDEEFQHALKEDLPRYGSVIVQKYIPGREMTVSILETEKGFEVLPILELRPKRRFYDYVAKYTKGETEFILPAPLNPSEERLVKETALKAFVEAGCRGFGRVDGIFSNGRFYFLEINTVPGLTETSDLPASAKAGGIEFEELVEIILKSAFLKGEVRA.

The 195-residue stretch at T99–K293 folds into the ATP-grasp domain. An ATP-binding site is contributed by G125–T176. Residues D248, E260, and N262 each contribute to the Mg(2+) site.

This sequence belongs to the D-alanine--D-alanine ligase family. Requires Mg(2+) as cofactor. Mn(2+) serves as cofactor.

It is found in the cytoplasm. The enzyme catalyses 2 D-alanine + ATP = D-alanyl-D-alanine + ADP + phosphate + H(+). It participates in cell wall biogenesis; peptidoglycan biosynthesis. Functionally, cell wall formation. In Thermotoga petrophila (strain ATCC BAA-488 / DSM 13995 / JCM 10881 / RKU-1), this protein is D-alanine--D-alanine ligase.